A 199-amino-acid polypeptide reads, in one-letter code: COMM domain-containing protein 2 (199 aa).

The COMM domain maps to 123–190; the sequence is SYHNLEWRLD…QALEEMKTNH (68 aa).

The protein belongs to the COMM domain-containing protein 2 family. As to quaternary structure, component of the commander complex consisting of the CCC subcomplex and the retriever subcomplex. Component of the CCC (COMMD/CCDC22/CCDC93) subcomplex consisting of COMMD1, COMMD2, COMMD3, COMMD4, COMMD5, COMMD6, COMMD7, COMMD8, COMMD9, COMMD10, CCDC22 and CCDC93; within the complex forms a heterodimer with COMMD3. Interacts with RELA, RELB, NFKB1/p105, NFKB2/p100. Interacts with CCDC22, CCDC93, SCNN1B, CUL3, CUL4B, CUL5, CUL7. In terms of tissue distribution, ubiquitous.

It is found in the cytoplasm. Functionally, scaffold protein in the commander complex that is essential for endosomal recycling of transmembrane cargos; the commander complex is composed of the CCC subcomplex and the retriever subcomplex. May modulate activity of cullin-RING E3 ubiquitin ligase (CRL) complexes. May down-regulate activation of NF-kappa-B. This chain is COMM domain-containing protein 2 (COMMD2), found in Homo sapiens (Human).